The chain runs to 200 residues: Recombination protein RecR (200 aa).

A C4-type zinc finger spans residues 60–75; that stretch reads CVYCQALTEDDVCNIC. One can recognise a Toprim domain in the interval 83-177; the sequence is TKLCIIESML…KISRIGFGVP (95 aa).

Belongs to the RecR family.

In terms of biological role, may play a role in DNA repair. It seems to be involved in an RecBC-independent recombinational process of DNA repair. It may act with RecF and RecO. The polypeptide is Recombination protein RecR (Francisella tularensis subsp. tularensis (strain WY96-3418)).